The following is a 322-amino-acid chain: Tyrosine recombinase XerC (322 aa).

The interval Met-1–Asp-25 is disordered. Over residues Pro-16–Asp-25 the composition is skewed to low complexity. The region spanning Asp-25 to Leu-111 is the Core-binding (CB) domain. The 178-residue stretch at Lys-132–Asp-309 folds into the Tyr recombinase domain. Catalysis depends on residues Arg-171, Lys-195, His-261, Arg-264, and His-287. The active-site O-(3'-phospho-DNA)-tyrosine intermediate is the Tyr-296.

This sequence belongs to the 'phage' integrase family. XerC subfamily. As to quaternary structure, forms a cyclic heterotetrameric complex composed of two molecules of XerC and two molecules of XerD.

It localises to the cytoplasm. Its function is as follows. Site-specific tyrosine recombinase, which acts by catalyzing the cutting and rejoining of the recombining DNA molecules. The XerC-XerD complex is essential to convert dimers of the bacterial chromosome into monomers to permit their segregation at cell division. It also contributes to the segregational stability of plasmids. This chain is Tyrosine recombinase XerC, found in Xanthomonas campestris pv. campestris (strain 8004).